We begin with the raw amino-acid sequence, 560 residues long: Putative protease Do-like 11, mitochondrial (560 aa).

Residues 1–65 (MFFRPCVHTV…RRSSTSAAER (65 aa)) constitute a mitochondrion transit peptide. Residues 117-302 (TEYSKSKPWK…ESRQYSCFGS (186 aa)) form a serine protease region. Residues H150, D184, and S258 each act as charge relay system in the active site. Residues 288–384 (ITSVQESRQY…YLVSMKKPGE (97 aa)) form the PDZ domain.

It belongs to the peptidase S1C family.

The protein localises to the mitochondrion membrane. Its function is as follows. Putative serine protease. The chain is Putative protease Do-like 11, mitochondrial (DEGP11) from Arabidopsis thaliana (Mouse-ear cress).